Here is a 478-residue protein sequence, read N- to C-terminus: Lipoprotein lipase (478 aa).

The first 27 residues, 1 to 27, serve as a signal peptide directing secretion; the sequence is MESKALLLVALSVWLQSLIVSREGLAT. The tract at residues 35 to 56 is interaction with GPIHBP1; the sequence is RDFTDIESKFALRTPEDTVEDT. A disulfide bridge links Cys-57 with Cys-70. N-linked (GlcNAc...) asparagine glycosylation occurs at Asn-73. Tyr-124 carries the 3'-nitrotyrosine modification. Ser-162 functions as the Nucleophile in the catalytic mechanism. Asp-186 acts as the Charge relay system in catalysis. Tyr-194 carries the post-translational modification 3'-nitrotyrosine. Positions 197, 200, 202, and 205 each coordinate Ca(2+). Cys-246 and Cys-269 form a disulfide bridge. The segment at 246–269 is essential for determining substrate specificity; sequence CNIGEAIRVIAERGLGDVDQLVKC. Residue His-271 is the Charge relay system of the active site. 2 disulfide bridges follow: Cys-294/Cys-313 and Cys-305/Cys-308. The 124-residue stretch at 344–467 folds into the PLAT domain; that stretch reads FHYQVKMRFS…KGKSSVVFVK (124 aa). The residue at position 346 (Tyr-346) is a 3'-nitrotyrosine. Asn-389 carries an N-linked (GlcNAc...) asparagine glycan. The interval 420–424 is important for interaction with lipoprotein particles; the sequence is WSNWW. Residues 433 to 437 form an important for heparin binding region; that stretch reads KIRVK. Residues 446-470 form an interaction with GPIHBP1 region; that stretch reads IFCSREKKSHLQKGKSSVVFVKCHD. A disulfide bond links Cys-448 and Cys-468.

It belongs to the AB hydrolase superfamily. Lipase family. In terms of assembly, homodimer. Interacts with GPIHBP1 with 1:1 stoichiometry. Interacts with APOC2; the interaction activates LPL activity in the presence of lipids. Interaction with heparan sulfate proteoglycans is required to protect LPL against loss of activity. Associates with lipoprotein particles in blood plasma. Interacts with LMF1 and SEL1L; interaction with SEL1L is required to prevent aggregation of newly synthesized LPL in the endoplasmic reticulum (ER), and for normal export of LPL from the ER to the extracellular space. Interacts with SORL1; SORL1 acts as a sorting receptor, promoting LPL localization to endosomes and later to lysosomes, leading to degradation of newly synthesized LPL. Tyrosine nitration after lipopolysaccharide (LPS) challenge down-regulates the lipase activity.

The protein resides in the cell membrane. It localises to the secreted. The protein localises to the extracellular space. It is found in the extracellular matrix. It catalyses the reaction a triacylglycerol + H2O = a diacylglycerol + a fatty acid + H(+). The catalysed reaction is a 1,2-diacyl-sn-glycero-3-phosphocholine + H2O = a 2-acyl-sn-glycero-3-phosphocholine + a fatty acid + H(+). It carries out the reaction 1,2,3-tri-(9Z-octadecenoyl)-glycerol + H2O = di-(9Z)-octadecenoylglycerol + (9Z)-octadecenoate + H(+). The enzyme catalyses 1,2-di-(9Z-octadecenoyl)-sn-glycero-3-phosphocholine + H2O = (9Z-octadecenoyl)-sn-glycero-3-phosphocholine + (9Z)-octadecenoate + H(+). It catalyses the reaction 1,2,3-tributanoylglycerol + H2O = dibutanoylglycerol + butanoate + H(+). The catalysed reaction is 1,2-dihexadecanoyl-sn-glycero-3-phosphocholine + H2O = hexadecanoyl-sn-glycero-3-phosphocholine + hexadecanoate + H(+). The apolipoprotein APOC2 acts as a coactivator of LPL activity. Ca(2+) binding promotes protein stability and formation of the active homodimer. Interaction with GPIHBP1 protects LPL against inactivation by ANGPTL4. Key enzyme in triglyceride metabolism. Catalyzes the hydrolysis of triglycerides from circulating chylomicrons and very low density lipoproteins (VLDL), and thereby plays an important role in lipid clearance from the blood stream, lipid utilization and storage. Although it has both phospholipase and triglyceride lipase activities it is primarily a triglyceride lipase with low but detectable phospholipase activity. Mediates margination of triglyceride-rich lipoprotein particles in capillaries. Recruited to its site of action on the luminal surface of vascular endothelium by binding to GPIHBP1 and cell surface heparan sulfate proteoglycans. In Sus scrofa (Pig), this protein is Lipoprotein lipase (LPL).